A 696-amino-acid polypeptide reads, in one-letter code: Golgi integral membrane protein 4 (696 aa).

The N-myristoyl glycine moiety is linked to residue Gly2. Over 2-12 (GNGMCSRKQKR) the chain is Cytoplasmic. Residues 13–33 (IFQTLLLLTVVFGFLYGAMLY) form a helical; Signal-anchor for type II membrane protein membrane-spanning segment. Over 34-696 (YELQTQLRKA…AEKSHRRAEM (663 aa)) the chain is Lumenal. Positions 35 to 244 (ELQTQLRKAE…KQLKDTLNRI (210 aa)) form a coiled coil. A golgi targeting region spans residues 38 to 107 (TQLRKAEAVA…ETLNKGRQDS (70 aa)). The interval 80–175 (LEHKKAKEDF…QELSKLKETV (96 aa)) is endosome targeting. Disordered regions lie at residues 122–145 (KSQHEELKKQHSDLEEEHRKQGED), 244–391 (IPSL…HARA), and 427–696 (LREH…RAEM). Positions 123-145 (SQHEELKKQHSDLEEEHRKQGED) are enriched in basic and acidic residues. Positions 176-248 (YNLREENRQL…DTLNRIPSLR (73 aa)) are golgi targeting. Positions 254-269 (EQQNVTQVAHSPQGYN) are enriched in polar residues. An N-linked (GlcNAc...) asparagine glycan is attached at Asn257. Basic and acidic residues-rich tracts occupy residues 271 to 281 (AREKPTREVQE), 298 to 313 (RAEDTKLYAPTHKEAE), 324 to 343 (EVERREPEEHQVEEEHRKAL), 355 to 364 (EHLEEEHDPS), and 370 to 380 (REWKEQHEQRE). Ser364 carries the phosphoserine modification. A compositionally biased stretch (low complexity) spans 436-453 (QQRLQGHLLRQQEQQQQQ). Composition is skewed to basic and acidic residues over residues 464 to 476 (AELEEGRPQHQEQ) and 505 to 545 (AYER…RAAV). Ser538 carries the phosphoserine modification. The segment covering 604-626 (QQEDNVDEQYQEEAEEEVQEDLT) has biased composition (acidic residues). The residue at position 613 (Tyr613) is a Phosphotyrosine. A Phosphothreonine modification is found at Thr626. Basic and acidic residues-rich tracts occupy residues 627–638 (EEKKRELEHNAE) and 661–672 (RDDNRPKGREEH). Tyr673 is modified (phosphotyrosine). Residues 673-683 (YEEEEEEEEDG) show a composition bias toward acidic residues.

This sequence belongs to the GOLIM4 family. Phosphorylated probably by c-AMP-dependent kinases in its lumenal part. In terms of processing, O-glycosylated; modified by sialic acid residues. Post-translationally, N-glycosylated; N-glycans are probably of the complex type and modified by sialic acid residues.

The protein localises to the golgi apparatus. Its subcellular location is the golgi stack membrane. It is found in the endosome membrane. It localises to the membrane. In terms of biological role, plays a role in endosome to Golgi protein trafficking; mediates protein transport along the late endosome-bypass pathway from the early endosome to the Golgi. In Homo sapiens (Human), this protein is Golgi integral membrane protein 4 (GOLIM4).